Reading from the N-terminus, the 383-residue chain is Pheromone-regulated membrane protein 10 (383 aa).

Topologically, residues 1-65 (MIVSFGDATT…ILADTNLYPP (65 aa)) are cytoplasmic. A helical membrane pass occupies residues 66–86 (WMCVLLYAFCSAMVTPYAFGG). A topological domain (extracellular) is located at residue Asp-87. A helical transmembrane segment spans residues 88-108 (WVNLAISFFMGLCVGSLQFIL). Topologically, residues 109 to 117 (SQKSYMYSN) are cytoplasmic. A helical transmembrane segment spans residues 118-138 (VFEISASIVVSFCGRAFGSIP). Over 139–141 (RSH) the chain is Extracellular. A helical transmembrane segment spans residues 142-162 (ICFGAVTQGSLALILPGYIIL). Residues 163 to 180 (CGALELQSRSLVAGAVRM) are Cytoplasmic-facing. Residues 181-201 (FYAIIYSLFLGFGITLGSALF) traverse the membrane as a helical segment. The Extracellular segment spans residues 202–216 (GWMYHNATNEISCPQ). Residues 217 to 237 (LISPWFRFLFVPAFTISISLL) traverse the membrane as a helical segment. Over 238–241 (NQAH) the chain is Cytoplasmic. A helical membrane pass occupies residues 242 to 262 (ISQLPVMVFISCTGYVVTYWA). Residues 263-271 (GKHFANSTE) are Extracellular-facing. The helical transmembrane segment at 272-292 (FTAALAAFVIGVLGNLYSRIW) threads the bilayer. Position 293 (Lys-293) is a topological domain, cytoplasmic. Residues 294–314 (GLAVSAMLPAIFVQVPSGIAS) form a helical membrane-spanning segment. The Extracellular portion of the chain corresponds to 315–352 (QNSLLSGLQSANTIVNANETITTSTSDPSSSMSFGMTM). A helical transmembrane segment spans residues 353–373 (IQVCVGISVGLFASSLFVYPF). Topologically, residues 374–383 (GKKKTGLFSL) are cytoplasmic.

The protein belongs to the ThrE exporter (TC 2.A.79) family.

The protein localises to the membrane. This is Pheromone-regulated membrane protein 10 (PRM10) from Saccharomyces cerevisiae (strain ATCC 204508 / S288c) (Baker's yeast).